A 476-amino-acid chain; its full sequence is Chromosomal replication initiator protein DnaA (476 aa).

The interval 1-75 (MLAPDTFWLA…TQMAENHFAR (75 aa)) is domain I, interacts with DnaA modulators. Positions 75–139 (RPVQLQLELA…AKEKQEKNPT (65 aa)) are domain II. Residues 110–141 (FDAPTESAQKAPKDTKDTKDAKEKQEKNPTRL) form a disordered region. The segment covering 120 to 138 (APKDTKDTKDAKEKQEKNP) has biased composition (basic and acidic residues). The domain III, AAA+ region stretch occupies residues 140–356 (RLNPSFTFNT…GALKRVVAYS (217 aa)). ATP-binding residues include Gly-184, Gly-186, Lys-187, and Thr-188. Positions 357–476 (RFTGHALTLD…FNTLLHILRG (120 aa)) are domain IV, binds dsDNA.

It belongs to the DnaA family. Oligomerizes as a right-handed, spiral filament on DNA at oriC.

The protein resides in the cytoplasm. Its function is as follows. Plays an essential role in the initiation and regulation of chromosomal replication. ATP-DnaA binds to the origin of replication (oriC) to initiate formation of the DNA replication initiation complex once per cell cycle. Binds the DnaA box (a 9 base pair repeat at the origin) and separates the double-stranded (ds)DNA. Forms a right-handed helical filament on oriC DNA; dsDNA binds to the exterior of the filament while single-stranded (ss)DNA is stabiized in the filament's interior. The ATP-DnaA-oriC complex binds and stabilizes one strand of the AT-rich DNA unwinding element (DUE), permitting loading of DNA polymerase. After initiation quickly degrades to an ADP-DnaA complex that is not apt for DNA replication. Binds acidic phospholipids. The sequence is that of Chromosomal replication initiator protein DnaA from Nitrosospira multiformis (strain ATCC 25196 / NCIMB 11849 / C 71).